Here is a 119-residue protein sequence, read N- to C-terminus: Large ribosomal subunit protein bL20 (119 aa).

It belongs to the bacterial ribosomal protein bL20 family.

Binds directly to 23S ribosomal RNA and is necessary for the in vitro assembly process of the 50S ribosomal subunit. It is not involved in the protein synthesizing functions of that subunit. This is Large ribosomal subunit protein bL20 from Bacillus velezensis (strain DSM 23117 / BGSC 10A6 / LMG 26770 / FZB42) (Bacillus amyloliquefaciens subsp. plantarum).